A 117-amino-acid chain; its full sequence is Non-specific lipid-transfer protein 3 (117 aa).

An N-terminal signal peptide occupies residues 1-25 (MAGLVKLSCLVLACMIVAGPIATNA). Intrachain disulfides connect C29–C76, C39–C53, C54–C99, and C74–C113.

Belongs to the plant LTP family.

Its function is as follows. Plant non-specific lipid-transfer proteins transfer phospholipids as well as galactolipids across membranes. May play a role in wax or cutin deposition in the cell walls of expanding epidermal cells and certain secretory tissues. The polypeptide is Non-specific lipid-transfer protein 3 (LTP3) (Brassica napus (Rape)).